The primary structure comprises 450 residues: tRNA-2-methylthio-N(6)-dimethylallyladenosine synthase (450 aa).

The MTTase N-terminal domain maps to Lys2–Arg119. [4Fe-4S] cluster is bound by residues Cys11, Cys48, Cys82, Cys156, Cys160, and Cys163. The Radical SAM core domain occupies Arg142 to Arg375. In terms of domain architecture, TRAM spans Gln378–Val448.

Belongs to the methylthiotransferase family. MiaB subfamily. Monomer. The cofactor is [4Fe-4S] cluster.

Its subcellular location is the cytoplasm. It carries out the reaction N(6)-dimethylallyladenosine(37) in tRNA + (sulfur carrier)-SH + AH2 + 2 S-adenosyl-L-methionine = 2-methylsulfanyl-N(6)-dimethylallyladenosine(37) in tRNA + (sulfur carrier)-H + 5'-deoxyadenosine + L-methionine + A + S-adenosyl-L-homocysteine + 2 H(+). Its function is as follows. Catalyzes the methylthiolation of N6-(dimethylallyl)adenosine (i(6)A), leading to the formation of 2-methylthio-N6-(dimethylallyl)adenosine (ms(2)i(6)A) at position 37 in tRNAs that read codons beginning with uridine. This is tRNA-2-methylthio-N(6)-dimethylallyladenosine synthase from Cupriavidus necator (strain ATCC 17699 / DSM 428 / KCTC 22496 / NCIMB 10442 / H16 / Stanier 337) (Ralstonia eutropha).